The sequence spans 261 residues: Indole-3-glycerol phosphate synthase (261 aa).

Belongs to the TrpC family.

It carries out the reaction 1-(2-carboxyphenylamino)-1-deoxy-D-ribulose 5-phosphate + H(+) = (1S,2R)-1-C-(indol-3-yl)glycerol 3-phosphate + CO2 + H2O. The protein operates within amino-acid biosynthesis; L-tryptophan biosynthesis; L-tryptophan from chorismate: step 4/5. The chain is Indole-3-glycerol phosphate synthase from Paraburkholderia phymatum (strain DSM 17167 / CIP 108236 / LMG 21445 / STM815) (Burkholderia phymatum).